The following is a 568-amino-acid chain: Archaeosine synthase subunit alpha (568 aa).

The region spanning 496–565 is the PUA domain; the sequence is YDALKSYWVK…AKKGVAVKVR (70 aa).

Belongs to the archaeosine synthase type 1 family. In terms of assembly, forms a robust complex with the archaeosine synthase beta subunit RaSEA, likely an alpha(2)beta(2) heterotetrameric structure. Formation of this complex highly increases lysine transfer activity.

The catalysed reaction is 7-cyano-7-carbaguanosine(15) in tRNA + L-lysine = 7-N-[(5S)-5-amino-5-carboxypentyl]formamidino-7-deazaguanosine(15) in tRNA. Its pathway is tRNA modification; archaeosine-tRNA biosynthesis. Functions in the biosynthesis of archaeosine, a modified nucleoside present in the dihydrouridine loop (D-loop) of archaeal tRNAs. Catalyzes the addition of L-lysine to the cyano group of 7-cyano-7-deazaguanine (preQ0)-modified tRNAs at position 15, to generate q0kN15-tRNA, a q0N lysine adduct identified as 7-N-[(5S)-5-amino-5-carboxypentyl]formamidino-7-deazaguanosine. This chain is Archaeosine synthase subunit alpha, found in Thermococcus kodakarensis (strain ATCC BAA-918 / JCM 12380 / KOD1) (Pyrococcus kodakaraensis (strain KOD1)).